Here is a 217-residue protein sequence, read N- to C-terminus: N-(5'-phosphoribosyl)anthranilate isomerase (217 aa).

It belongs to the TrpF family.

It catalyses the reaction N-(5-phospho-beta-D-ribosyl)anthranilate = 1-(2-carboxyphenylamino)-1-deoxy-D-ribulose 5-phosphate. Its pathway is amino-acid biosynthesis; L-tryptophan biosynthesis; L-tryptophan from chorismate: step 3/5. The sequence is that of N-(5'-phosphoribosyl)anthranilate isomerase from Bacillus velezensis (strain DSM 23117 / BGSC 10A6 / LMG 26770 / FZB42) (Bacillus amyloliquefaciens subsp. plantarum).